Here is a 507-residue protein sequence, read N- to C-terminus: Heat shock 70 kDa protein 14-B (507 aa).

It belongs to the heat shock protein 70 family. As to quaternary structure, component of ribosome-associated complex (RAC).

The protein resides in the cytoplasm. The protein localises to the cytosol. In terms of biological role, component of the ribosome-associated complex (RAC), a complex involved in folding or maintaining nascent polypeptides in a folding-competent state. This chain is Heat shock 70 kDa protein 14-B (hspa14-b), found in Xenopus laevis (African clawed frog).